A 766-amino-acid polypeptide reads, in one-letter code: MSPLARTPRKTSVLDTVEHAATTPDQPQPYGELGLKDDEYRRIRQILGRRPTDTELAMYSVMWSEHCSYKSSKVHLRYFGETTSDEMRAAMLAGIGENAGVVDIGDGWAVTFKVESHNHPSYVEPYQGAATGVGGIVRDIMAMGARPVAVMDQLRFGAADAPDTRRVLDGVVRGIGGYGNSLGLPNIGGETVFDPCYAGNPLVNALCVGVLRQEDLHLAFASGAGNKIILFGARTGLDGIGGVSVLASDTFDAEGSRKKLPSVQVGDPFMEKVLIECCLELYAGGLVIGIQDLGGAGLSCATSELASAGDGGMTIQLDSVPLRAKEMTPAEVLCSESQERMCAVVSPKNVDAFLAVCRKWEVLATVIGEVTDGDRLQITWHGETVVDVPPRTVAHEGPVYQRPVARPDTQDALNADRSAKLSRPVTGDELRATLLALLGSPHLCSRAFITEQYDRYVRGNTVLAEHADGGMLRIDESTGRGIAVSTDASGRYTLLDPYAGAQLALAEAYRNVAVTGATPVAVTNCLNFGSPEDPGVMWQFTQAVRGLADGCADLGIPVTGGNVSFYNQTGSAAILPTPVVGVLGVIDDVRRRIPTGLGAEPGETLMLLGDTRDEFDGSVWAQVTADHLGGLPPVVDLAREKLLAAVLSSASRDGLVSAAHDLSEGGLAQAIVESALAGETGCRIVLPEGADPFVLLFSESAGRVLVAVPRTEESRFRGMCEARGLPAVRIGVVDQGSDAVEVQGLFAVSLAELRATSEAVLPRYFG.

Histidine 66 is an active-site residue. Tyrosine 69 and lysine 113 together coordinate ATP. Glutamate 115 is a Mg(2+) binding site. Residues 116–119 and arginine 138 contribute to the substrate site; that span reads SHNH. The Proton acceptor role is filled by histidine 117. Mg(2+) is bound at residue aspartate 139. Glutamine 264 is a binding site for substrate. Aspartate 292 contributes to the Mg(2+) binding site. Residue 336–338 participates in substrate binding; the sequence is ESQ. Asparagine 524 and glycine 561 together coordinate ATP. Asparagine 562 provides a ligand contact to Mg(2+). Serine 564 serves as a coordination point for substrate.

The protein belongs to the FGAMS family. Monomer. Part of the FGAM synthase complex composed of 1 PurL, 1 PurQ and 2 PurS subunits.

Its subcellular location is the cytoplasm. The catalysed reaction is N(2)-formyl-N(1)-(5-phospho-beta-D-ribosyl)glycinamide + L-glutamine + ATP + H2O = 2-formamido-N(1)-(5-O-phospho-beta-D-ribosyl)acetamidine + L-glutamate + ADP + phosphate + H(+). It participates in purine metabolism; IMP biosynthesis via de novo pathway; 5-amino-1-(5-phospho-D-ribosyl)imidazole from N(2)-formyl-N(1)-(5-phospho-D-ribosyl)glycinamide: step 1/2. Functionally, part of the phosphoribosylformylglycinamidine synthase complex involved in the purines biosynthetic pathway. Catalyzes the ATP-dependent conversion of formylglycinamide ribonucleotide (FGAR) and glutamine to yield formylglycinamidine ribonucleotide (FGAM) and glutamate. The FGAM synthase complex is composed of three subunits. PurQ produces an ammonia molecule by converting glutamine to glutamate. PurL transfers the ammonia molecule to FGAR to form FGAM in an ATP-dependent manner. PurS interacts with PurQ and PurL and is thought to assist in the transfer of the ammonia molecule from PurQ to PurL. The chain is Phosphoribosylformylglycinamidine synthase subunit PurL from Mycobacterium bovis (strain BCG / Pasteur 1173P2).